The primary structure comprises 525 residues: Delta(24)-sterol reductase homolog dhcr-24 (525 aa).

2 helical membrane-spanning segments follow: residues 27 to 47 (WVFVVPFLLPLSFLFNTVFDF) and 214 to 234 (SLFFAIPWSQGTICFLVAATI). The 193-residue stretch at 47–239 (FRNRIVHAVN…VAATIKIIPC (193 aa)) folds into the FAD-binding PCMH-type domain.

Belongs to the FAD-binding oxidoreductase/transferase type 4 family. Requires FAD as cofactor.

The protein resides in the endoplasmic reticulum membrane. It localises to the golgi apparatus membrane. It carries out the reaction cholesterol + NADP(+) = desmosterol + NADPH + H(+). The enzyme catalyses lanosterol + NADPH + H(+) = 24,25-dihydrolanosterol + NADP(+). It catalyses the reaction 5alpha-cholest-8-en-3beta-ol + NADP(+) = zymosterol + NADPH + H(+). It functions in the pathway steroid biosynthesis; cholesterol biosynthesis. In terms of biological role, catalyzes the reduction of the delta-24 double bond of sterol intermediates during cholesterol biosynthesis. This is Delta(24)-sterol reductase homolog dhcr-24 from Caenorhabditis elegans.